Reading from the N-terminus, the 296-residue chain is NAD kinase (296 aa).

The active-site Proton acceptor is the Asp72. NAD(+) contacts are provided by residues 72–73 (DG), 146–147 (ND), Arg157, Lys174, Asp176, 187–192 (TAYALS), and Gln247.

This sequence belongs to the NAD kinase family. A divalent metal cation is required as a cofactor.

It localises to the cytoplasm. It catalyses the reaction NAD(+) + ATP = ADP + NADP(+) + H(+). Involved in the regulation of the intracellular balance of NAD and NADP, and is a key enzyme in the biosynthesis of NADP. Catalyzes specifically the phosphorylation on 2'-hydroxyl of the adenosine moiety of NAD to yield NADP. The sequence is that of NAD kinase from Pseudomonas fluorescens (strain SBW25).